Consider the following 2453-residue polypeptide: Nuclear receptor corepressor 1 (2453 aa).

Polar residues predominate over residues 1-29; it reads MSSSGYPPNQGAFSTEQSRYPSHSVQYTF. Disordered regions lie at residues 1–116, 147–177, and 206–231; these read MSSS…QVSD, PAFGVKHEAPSSPLSGQPCGDDQNASPSKLS, and QQQLEEEAAKPPEPEKPVSPPPVEQK. An interaction with ZBTB33 and HEXIM1 region spans residues 1 to 373; sequence MSSSGYPPNQ…QRGAGLSATI (373 aa). Over residues 51-64 the composition is skewed to low complexity; the sequence is SQASQLLQQQQQQQ. Composition is skewed to basic and acidic residues over residues 77–88 and 99–116; these read PGSDRPQERRSG and VDHDSLESKRPRLEQVSD. At S172 the chain carries Phosphoserine. Residues 174–216 are a coiled coil; sequence SKLSKEELIQSMDRVDREIAKVEQQILKLKKKQQQLEEEAAKP. Over residues 212–221 the composition is skewed to basic and acidic residues; it reads EAAKPPEPEK. Residue S224 is modified to Phosphoserine. Residues 254 to 312 form an interaction with SIN3A/B region; that stretch reads FEGLGPKVELPLYNQPSDTKVYHENIKTNQVMRKKLILFFKRRNHARKQREQKICQRYD. The stretch at 299–328 forms a coiled coil; sequence ARKQREQKICQRYDQLMEAWEKKVDRIENN. In terms of domain architecture, SANT 1 spans 435–486; the sequence is QFMNVWTDHEKEIFKDKFIQHPKNFGLIASYLERKSVPDCVLYYYLTKKNEN. Disordered stretches follow at residues 497-631 and 677-908; these read KRRG…TEEE and LLQQ…PERQ. The stretch at 501-550 forms a coiled coil; sequence RNQQIARPSQEEKVEEKEEDKAEKTEKKEEEKKDDEEKDDKEDSKETTKE. 2 stretches are compositionally biased toward basic and acidic residues: residues 509–531 and 541–556; these read SQEEKVEEKEEDKAEKTEKKEEE and KEDSKETTKEKDRTEA. A compositionally biased stretch (low complexity) spans 592–604; it reads EAAAANAAAAATE. The span at 605-616 shows a compositional bias: pro residues; sequence EPPPPLPPPPEP. Residues 622-673 form the SANT 2 domain; that stretch reads VETSRWTEEEMEVAKKGLVEHGRNWAAIAKMVGTKSEAQCKNFYFNYKRRHN. Polar residues predominate over residues 697–707; the sequence is QCESVASTVSA. A compositionally biased stretch (acidic residues) spans 708 to 727; that stretch reads QEDEDIEASNEEENPEDSEG. Residues 771–787 are compositionally biased toward low complexity; it reads TTDPAPCASPSSAVPTT. Positions 851–885 are enriched in basic and acidic residues; sequence GEGDAKERDLESTSEKTEARDEDVVVAEQIERPEP. Residue S1011 is modified to Phosphoserine. The tract at residues 1034-1058 is disordered; sequence VRLPTTRPTRPPPPLIPSSKTTVAS. A Glycyl lysine isopeptide (Lys-Gly) (interchain with G-Cter in SUMO1); alternate cross-link involves residue K1117. K1117 is covalently cross-linked (Glycyl lysine isopeptide (Lys-Gly) (interchain with G-Cter in SUMO2); alternate). S1122 carries the post-translational modification Phosphoserine. K1195 participates in a covalent cross-link: Glycyl lysine isopeptide (Lys-Gly) (interchain with G-Cter in SUMO2). Phosphoserine is present on residues S1206, S1207, S1274, S1292, and S1333. The residue at position 1347 (K1347) is an N6-acetyllysine. Position 1378 is a phosphothreonine (T1378). K1400 is covalently cross-linked (Glycyl lysine isopeptide (Lys-Gly) (interchain with G-Cter in SUMO2)). A Glycyl lysine isopeptide (Lys-Gly) (interchain with G-Cter in SUMO2); alternate cross-link involves residue K1423. Position 1423 is an N6-acetyllysine; alternate (K1423). The interval 1450 to 1544 is disordered; the sequence is GEPVRARHTS…SIPAKSPVPG (95 aa). 2 positions are modified to phosphoserine: S1459 and S1481. Polar residues predominate over residues 1459–1469; sequence SVVSSGPSVLR. Over residues 1495–1514 the composition is skewed to polar residues; it reads VSYQNTISRGSPMMNRTSDV. Residues 1510-2453 form an interaction with C1D region; it reads RTSDVSSSKS…QYETLSDSDD (944 aa). K1525 is covalently cross-linked (Glycyl lysine isopeptide (Lys-Gly) (interchain with G-Cter in SUMO2)). A Phosphoserine modification is found at S1598. 2 disordered regions span residues 1697–1780 and 1902–1939; these read RPYN…VRTQ and ALPSGKAQPHASVVYSEAGKDKGPPPKSRYEEELRTRG. Composition is skewed to basic and acidic residues over residues 1718–1745 and 1919–1937; these read AEREREREREKERERERERERERERERI and AGKDKGPPPKSRYEEELRT. The CORNR box 1 motif lies at 1949–1953; it reads IDVII. Positions 1959-2060 are disordered; that stretch reads SDKDARERGS…SSQSEGMGQV (102 aa). Residues 1968–1979 are compositionally biased toward low complexity; it reads SQSSDSSSSLSS. A phosphoserine mark is found at S1993 and S1997. The ID1 stretch occupies residues 2050 to 2129; it reads PSSQSEGMGQ…QSQTVLHPRP (80 aa). The tract at residues 2065–2068 is required for interaction with RARA in the absence of its ligand; the sequence is RLIT. The short motif at 2073–2077 is the CORNR box 2 element; it reads ICQII. The span at 2088-2124 shows a compositional bias: polar residues; sequence SQASTSTFQTSPSALSSTPVRTKTSSRYSPESQSQTV. The tract at residues 2088–2174 is disordered; sequence SQASTSTFQT…SPPQGPAVHE (87 aa). Residues S2116, S2134, S2150, S2165, and S2198 each carry the phosphoserine modification. The segment covering 2138-2156 has biased composition (basic and acidic residues); it reads LVDKSRGSRPGKSPERSHI. Positions 2226–2287 are ID2; sequence IFRKLNSSGG…EDIIRKALMG (62 aa). The CORNR box 3 signature appears at 2277–2281; that stretch reads LEDII. The tract at residues 2303–2396 is disordered; it reads PVGIMPGSAS…RPSSTGSTQF (94 aa). The segment covering 2310–2319 has biased composition (low complexity); that stretch reads SASTSVVTSS. T2412 bears the Phosphothreonine mark. Residues S2449 and S2451 each carry the phosphoserine modification.

This sequence belongs to the N-CoR nuclear receptor corepressors family. As to quaternary structure, forms a large corepressor complex that contains SIN3A/B and histone deacetylases HDAC1 and HDAC2. This complex associates with the thyroid receptor (TR) and the retinoid acid receptor (RAR) in the absence of ligand. Interacts directly with RARA; the interaction is facilitated with RARA trimethylation. Component of the N-Cor repressor complex, at least composed of CBFA2T3, HEXIM1, NCOR1, NCOR2, HDAC3, TBL1X, TBL1XR1, CORO2A and GPS2. Interacts with ZBTB33; the interaction serves to recruit the N-CoR complex to promoter regions containing methylated CpG dinucleotides. Interacts with TRIM28 and KDM3A. Interacts (via the RD1 domain) with BAZ1A (via its N-terminal); the interaction corepresses a number of NCOR1-regulated genes. Interacts with BCL6, C1D, DACH1, HEXIM1, HDAC7, RORA, RORC, SAP30, SIAH2, SIN3A and SIN3B. May interact with DEAF1. Interacts with RXRA. Interacts with SETD5. Interacts with VDR. Interacts with ZBTB7A. Interacts with AR. Interacts with HDAC3. Post-translationally, ubiquitinated; mediated by SIAH2 and leading to its subsequent proteasomal degradation. Ubiquitous.

Its subcellular location is the nucleus. In terms of biological role, mediates transcriptional repression by certain nuclear receptors. Part of a complex which promotes histone deacetylation and the formation of repressive chromatin structures which may impede the access of basal transcription factors. Participates in the transcriptional repressor activity produced by BCL6. Recruited by ZBTB7A to the androgen response elements/ARE on target genes, negatively regulates androgen receptor signaling and androgen-induced cell proliferation. Mediates the NR1D1-dependent repression and circadian regulation of TSHB expression. The NCOR1-HDAC3 complex regulates the circadian expression of the core clock gene ARTNL/BMAL1 and the genes involved in lipid metabolism in the liver. The sequence is that of Nuclear receptor corepressor 1 (Ncor1) from Mus musculus (Mouse).